Reading from the N-terminus, the 442-residue chain is MENAKMNSLIAQYPLVKDLVALKETTWFNPGTTSLAEGLPYVGLTEQDVQDAHARLSRFAPYLAKAFPETAATGGIIESELVAIPAMQKRLEKEYQQPISGQLLLKKDSHLPISGSIKARGGIYEVLAHAEKLALEAGLLTLDDDYSKLLSPEFKQFFSQYSIAVGSTGNLGLSIGIMSARIGFKVTVHMSADARAWKKAKLRSHGVTVVEYEQDYGVAVEEGRKAAQSDPNCFFIDDENSRTLFLGYSVAGQRLKAQFAQQGRIVDADNPLFVYLPCGVGGGPGGVAFGLKLAFGDHVHCFFAEPTHSPCMLLGVHTGLHDQISVQDIGIDNLTAADGLAVGRASGFVGRAMERLLDGFYTLSDQTMYDMLGWLAQEEGIRLEPSALAGMAGPQRVCASVSYQQMHGFSAEQLRNATHLVWATGGGMVPEEEMNQYLAKGR.

Lys-118 is subject to N6-(pyridoxal phosphate)lysine.

It belongs to the serine/threonine dehydratase family. DsdA subfamily. As to quaternary structure, monomer. The cofactor is pyridoxal 5'-phosphate.

The catalysed reaction is D-serine = pyruvate + NH4(+). The sequence is that of D-serine dehydratase from Escherichia coli O139:H28 (strain E24377A / ETEC).